The chain runs to 551 residues: Chaperonin GroEL (551 aa).

ATP-binding positions include 30-33 (TLGP), lysine 51, 87-91 (DGTTT), glycine 415, 479-481 (NAA), and aspartate 495. The segment at 523–551 (DSPKEDKSSDMPSPSAGGMGGMGGMGGMM) is disordered. Residues 539–551 (GGMGGMGGMGGMM) show a composition bias toward gly residues.

The protein belongs to the chaperonin (HSP60) family. Forms a cylinder of 14 subunits composed of two heptameric rings stacked back-to-back. Interacts with the co-chaperonin GroES.

The protein localises to the cytoplasm. The catalysed reaction is ATP + H2O + a folded polypeptide = ADP + phosphate + an unfolded polypeptide.. Functionally, together with its co-chaperonin GroES, plays an essential role in assisting protein folding. The GroEL-GroES system forms a nano-cage that allows encapsulation of the non-native substrate proteins and provides a physical environment optimized to promote and accelerate protein folding. The protein is Chaperonin GroEL of Buchnera aphidicola subsp. Chaetophorus leucomelas.